The following is a 171-amino-acid chain: I (171 aa).

Disordered stretches follow at residues 57 to 100 and 143 to 171; these read IQYP…LFAQ and PRTS…KRRA. The segment covering 151–162 has biased composition (basic and acidic residues); sequence EFKRGGGRERLP.

It belongs to the Orthorubulavirus I protein family.

The protein is I of Mumps virus genotype N (strain L-Zagreb vaccine) (MuV).